The sequence spans 158 residues: Protein ORF4 (158 aa).

Acts by interacting with multiple viral and host proteins to enhance the activity of viral RNA-dependent RNA polymerase. The chain is Protein ORF4 from Hepatitis E virus genotype 1 (isolate Human/Pakistan/Sar-55) (HEV-1).